Here is a 201-residue protein sequence, read N- to C-terminus: UPF0301 protein MAP_0045 (201 aa).

Belongs to the UPF0301 (AlgH) family.

The polypeptide is UPF0301 protein MAP_0045 (Mycolicibacterium paratuberculosis (strain ATCC BAA-968 / K-10) (Mycobacterium paratuberculosis)).